Here is a 196-residue protein sequence, read N- to C-terminus: HTH-type transcriptional regulator EcpR (196 aa).

The 59-residue stretch at 138–196 (KDIKKDKITDREMEIIRMTAQGMLPKSIARIENCSVKTVYTHRRNAEAKLYSKIYKLVP) folds into the HTH luxR-type domain. Residues 162–181 (PKSIARIENCSVKTVYTHRR) constitute a DNA-binding region (H-T-H motif).

This sequence belongs to the EcpR/MatA family.

It is found in the cytoplasm. Functionally, part of the ecpRABCDE operon, which encodes the E.coli common pilus (ECP). ECP is found in both commensal and pathogenic strains and plays a dual role in early-stage biofilm development and host cell recognition. Positively regulates the expression of the ecp operon. This is HTH-type transcriptional regulator EcpR (ecpR) from Escherichia coli O17:K52:H18 (strain UMN026 / ExPEC).